The following is a 390-amino-acid chain: 1-deoxy-D-xylulose 5-phosphate reductoisomerase (390 aa).

Residues Thr10, Gly11, Ser12, Val13, and Asn124 each contribute to the NADPH site. Lys125 contacts 1-deoxy-D-xylulose 5-phosphate. Residue Glu126 coordinates NADPH. A Mn(2+)-binding site is contributed by Asp150. Residues Ser151, Glu152, Ser181, and His204 each coordinate 1-deoxy-D-xylulose 5-phosphate. Mn(2+) is bound at residue Glu152. Position 210 (Gly210) interacts with NADPH. Residues Ser217, Asn222, Lys223, and Glu226 each contribute to the 1-deoxy-D-xylulose 5-phosphate site. Glu226 contacts Mn(2+).

It belongs to the DXR family. It depends on Mg(2+) as a cofactor. Requires Mn(2+) as cofactor.

It carries out the reaction 2-C-methyl-D-erythritol 4-phosphate + NADP(+) = 1-deoxy-D-xylulose 5-phosphate + NADPH + H(+). It participates in isoprenoid biosynthesis; isopentenyl diphosphate biosynthesis via DXP pathway; isopentenyl diphosphate from 1-deoxy-D-xylulose 5-phosphate: step 1/6. Catalyzes the NADPH-dependent rearrangement and reduction of 1-deoxy-D-xylulose-5-phosphate (DXP) to 2-C-methyl-D-erythritol 4-phosphate (MEP). The protein is 1-deoxy-D-xylulose 5-phosphate reductoisomerase of Janthinobacterium sp. (strain Marseille) (Minibacterium massiliensis).